Consider the following 212-residue polypeptide: Thiamine-phosphate synthase (212 aa).

38 to 42 (QLREK) provides a ligand contact to 4-amino-2-methyl-5-(diphosphooxymethyl)pyrimidine. Positions 71 and 90 each coordinate Mg(2+). Lys138 contributes to the 4-amino-2-methyl-5-(diphosphooxymethyl)pyrimidine binding site. Gly166 contributes to the 2-[(2R,5Z)-2-carboxy-4-methylthiazol-5(2H)-ylidene]ethyl phosphate binding site.

Belongs to the thiamine-phosphate synthase family. Requires Mg(2+) as cofactor.

The catalysed reaction is 2-[(2R,5Z)-2-carboxy-4-methylthiazol-5(2H)-ylidene]ethyl phosphate + 4-amino-2-methyl-5-(diphosphooxymethyl)pyrimidine + 2 H(+) = thiamine phosphate + CO2 + diphosphate. It carries out the reaction 2-(2-carboxy-4-methylthiazol-5-yl)ethyl phosphate + 4-amino-2-methyl-5-(diphosphooxymethyl)pyrimidine + 2 H(+) = thiamine phosphate + CO2 + diphosphate. The enzyme catalyses 4-methyl-5-(2-phosphooxyethyl)-thiazole + 4-amino-2-methyl-5-(diphosphooxymethyl)pyrimidine + H(+) = thiamine phosphate + diphosphate. It functions in the pathway cofactor biosynthesis; thiamine diphosphate biosynthesis; thiamine phosphate from 4-amino-2-methyl-5-diphosphomethylpyrimidine and 4-methyl-5-(2-phosphoethyl)-thiazole: step 1/1. Condenses 4-methyl-5-(beta-hydroxyethyl)thiazole monophosphate (THZ-P) and 2-methyl-4-amino-5-hydroxymethyl pyrimidine pyrophosphate (HMP-PP) to form thiamine monophosphate (TMP). The sequence is that of Thiamine-phosphate synthase from Chlamydia caviae (strain ATCC VR-813 / DSM 19441 / 03DC25 / GPIC) (Chlamydophila caviae).